Here is a 787-residue protein sequence, read N- to C-terminus: PAN2-PAN3 deadenylation complex subunit pan3 (787 aa).

Residues 1–20 (MNSGLTPSPSPAVAAAGPAG) are disordered. The span at 11 to 20 (PAVAAAGPAG) shows a compositional bias: low complexity. A C3H1-type zinc finger spans residues 23-51 (GSKLKFCRYYAKDRTCFYGDECQFLHDDQ). Disordered regions lie at residues 131–162 (EATY…AAHD), 179–210 (TMSQ…MSQS), and 226–291 (GGPT…PPST). 2 stretches are compositionally biased toward low complexity: residues 143–154 (NSSSSPSLLNDS) and 200–210 (STSRLSNMSQS). The PABPC-interacting motif-2 (PAM-2) motif lies at 185–200 (KTPNPTASEFIPKGGS). The span at 265-290 (TPNPANYMVPTSASTPVTNSVSQPPS) shows a compositional bias: polar residues. The pseudokinase domain stretch occupies residues 365-650 (QIDQADMPGV…SVNDIMPMIG (286 aa)). Residues arginine 422, 471–478 (DFHAGSET), and 545–546 (TK) each bind ATP. Positions 651 to 689 (ARFYTQLDAAQMRNDVIEEDLAKEVQNGRLFRLLAKLGT) form a coiled coil. Residues 690–787 (INERPEFQKD…ELVAAANGQL (98 aa)) are knob domain.

It belongs to the protein kinase superfamily. PAN3 family. In terms of assembly, homodimer. Forms a heterotrimer with a catalytic subunit pan2 to form the poly(A)-nuclease (PAN) deadenylation complex. Interacts (via PAM-2 motif) with poly(A)-binding protein pabpc1 (via PABC domain), conferring substrate specificity of the enzyme complex. Interacts with the GW182 family proteins tnrc6a, tnrc6b and tnrc6c.

Its subcellular location is the cytoplasm. It is found in the P-body. Its function is as follows. Regulatory subunit of the poly(A)-nuclease (PAN) deadenylation complex, one of two cytoplasmic mRNA deadenylases involved in general and miRNA-mediated mRNA turnover. PAN specifically shortens poly(A) tails of RNA and the activity is stimulated by poly(A)-binding protein (PABP). PAN deadenylation is followed by rapid degradation of the shortened mRNA tails by the CCR4-NOT complex. Deadenylated mRNAs are then degraded by two alternative mechanisms, namely exosome-mediated 3'-5' exonucleolytic degradation, or deadenylation-dependent mRNA decaping and subsequent 5'-3' exonucleolytic degradation by XRN1. PAN3 acts as a positive regulator for PAN activity, recruiting the catalytic subunit PAN2 to mRNA via its interaction with RNA and PABP, and to miRNA targets via its interaction with GW182 family proteins. This Xenopus tropicalis (Western clawed frog) protein is PAN2-PAN3 deadenylation complex subunit pan3.